The primary structure comprises 179 residues: Large ribosomal subunit protein uL6 (179 aa).

Belongs to the universal ribosomal protein uL6 family. In terms of assembly, part of the 50S ribosomal subunit.

In terms of biological role, this protein binds to the 23S rRNA, and is important in its secondary structure. It is located near the subunit interface in the base of the L7/L12 stalk, and near the tRNA binding site of the peptidyltransferase center. This Bacillus anthracis protein is Large ribosomal subunit protein uL6.